Here is a 242-residue protein sequence, read N- to C-terminus: MTEITDRYFNDVIARLSGLRDRLAAQMEKAADLIAAAARADRRVYVFGTGHSHMMAEELHYRAGGLAITVPILCGSIMLQDGAVASSHFERIEGAVRPILDRYGIRDGDVLVVVSNSGVNAAPIEAARYAREKGAAIIALTSVAYSNTIARGRTQLLSLADVVLDNDAPSGDAVLEIAGSALKVGPVSTALGVTILNAVFADVAARLVGEGDAPIYLSANMPGSGDINRSLVERYRDRNPHL.

Residues 30–214 (AADLIAAAAR…ARLVGEGDAP (185 aa)) enclose the SIS domain.

This sequence belongs to the UPF0309 family.

This is UPF0309 protein BMEA_B0892 from Brucella melitensis biotype 2 (strain ATCC 23457).